Here is a 374-residue protein sequence, read N- to C-terminus: GDSL esterase/lipase At3g50400 (374 aa).

Positions 1–26 (MKKSIFFVPVLVLFFFGSRFSRVASA) are cleaved as a signal peptide. Ser-41 serves as the catalytic Nucleophile. Asn-104 and Asn-125 each carry an N-linked (GlcNAc...) asparagine glycan. Residues Asp-339 and His-342 contribute to the active site.

It belongs to the 'GDSL' lipolytic enzyme family.

It is found in the secreted. The polypeptide is GDSL esterase/lipase At3g50400 (Arabidopsis thaliana (Mouse-ear cress)).